An 84-amino-acid chain; its full sequence is Small ribosomal subunit protein bS20 (84 aa).

It belongs to the bacterial ribosomal protein bS20 family.

Its function is as follows. Binds directly to 16S ribosomal RNA. The chain is Small ribosomal subunit protein bS20 from Limosilactobacillus fermentum (strain NBRC 3956 / LMG 18251) (Lactobacillus fermentum).